We begin with the raw amino-acid sequence, 596 residues long: Lamin-B2 (596 aa).

The segment at 1 to 20 is disordered; that stretch reads MASLPPHAGPATPLSPTRLS. The tract at residues 1 to 26 is head; it reads MASLPPHAGPATPLSPTRLSRLQEKE. T12 carries the post-translational modification Phosphothreonine. S15 is modified (phosphoserine). The IF rod domain occupies 24 to 380; the sequence is EKEELRELND…KLLEGEEERL (357 aa). The segment at 27–61 is coil 1A; that stretch reads ELRELNDRLAHYIDRVRALELENDRLLLRISEKEE. K59 carries the N6-acetyllysine; alternate modification. K59 participates in a covalent cross-link: Glycyl lysine isopeptide (Lys-Gly) (interchain with G-Cter in SUMO2); alternate. A linker 1 region spans residues 62-73; it reads VTTREVSGIKTL. The interval 74–207 is coil 1B; it reads YESELADARR…AFSKSVFEEE (134 aa). Residues K173 and K233 each participate in a glycyl lysine isopeptide (Lys-Gly) (interchain with G-Cter in SUMO2) cross-link. The tract at residues 208–234 is linker 2; it reads VRETRRRHERRLVEVDSSRQQEYDFKM. Residues 235 to 378 form a coil 2 region; it reads AQALEDLRSQ…YRKLLEGEEE (144 aa). S294 and S385 each carry phosphoserine. Residues 376 to 440 are disordered; the sequence is EEERLKLSPS…ASRVSSGSRL (65 aa). Residues 379–596 are tail; the sequence is RLKLSPSPSS…RTTSRGCRLM (218 aa). The span at 382–403 shows a compositional bias: low complexity; the sequence is LSPSPSSRITISRATSSSSSSS. T391 carries O-linked (GlcNAc) threonine glycosylation. Phosphoserine is present on residues S398, S400, and S402. At R413 the chain carries Omega-N-methylarginine. A Nuclear localization signal motif is present at residues 415–420; that stretch reads KRRRLE. Positions 425 to 439 are enriched in low complexity; sequence SGSPSRASRVSSGSR. The region spanning 438 to 559 is the LTD domain; the sequence is SRLAQQTVAT…VKAAKHSSVQ (122 aa). K465 participates in a covalent cross-link: Glycyl lysine isopeptide (Lys-Gly) (interchain with G-Cter in SUMO2). S473 carries the phosphoserine modification. Residues 552-596 form a disordered region; that stretch reads AAKHSSVQGRENGEEEEEEEAEFGEEDLFHQQGDPRTTSRGCRLM. Over residues 564–577 the composition is skewed to acidic residues; it reads GEEEEEEEAEFGEE. The span at 585–596 shows a compositional bias: polar residues; that stretch reads DPRTTSRGCRLM. C593 is subject to Cysteine methyl ester. C593 carries S-farnesyl cysteine lipidation. The propeptide at 594–596 is removed in mature form; sequence RLM.

This sequence belongs to the intermediate filament family. Dimer. Lamin dimers then assemble into dimeric head-to-tail polymers. Ultimately, two head-to-tail polymers assemble laterally into a protofilament with a uniformly shaped rod of 3.5 nm in diameter. Interacts with TMEM43. Post-translationally, B-type lamins undergo a series of modifications, such as farnesylation and phosphorylation. Increased phosphorylation of the lamins occurs before envelope disintegration and probably plays a role in regulating lamin associations. In terms of processing, phosphorylation plays a key role in lamin organization, subcellular localization and nuclear envelope disintegration. Phosphorylation by CDK1 at Ser-15 and Ser-385 at the onset of mitosis drives lamin disassembly and nuclear envelope breakdown. In terms of tissue distribution, germ cell-specific.

The protein resides in the nucleus lamina. Functionally, lamins are intermediate filament proteins that assemble into a filamentous meshwork, and which constitute the major components of the nuclear lamina, a fibrous layer on the nucleoplasmic side of the inner nuclear membrane. Lamins provide a framework for the nuclear envelope, bridging the nuclear envelope and chromatin, thereby playing an important role in nuclear assembly, chromatin organization, nuclear membrane and telomere dynamics. The structural integrity of the lamina is strictly controlled by the cell cycle, as seen by the disintegration and formation of the nuclear envelope in prophase and telophase, respectively. This is Lamin-B2 (Lmnb2) from Mus musculus (Mouse).